The primary structure comprises 185 residues: Ribosome-recycling factor (185 aa).

It belongs to the RRF family.

It is found in the cytoplasm. Responsible for the release of ribosomes from messenger RNA at the termination of protein biosynthesis. May increase the efficiency of translation by recycling ribosomes from one round of translation to another. The chain is Ribosome-recycling factor from Shewanella amazonensis (strain ATCC BAA-1098 / SB2B).